A 389-amino-acid polypeptide reads, in one-letter code: Methylthioribose kinase (389 aa).

Residues N37, K52, and 106-108 (EDL) contribute to the ATP site. A substrate-binding site is contributed by D224. 241 to 243 (DPE) is an ATP binding site. R331 contributes to the substrate binding site.

The protein belongs to the methylthioribose kinase family. In terms of assembly, homodimer.

The catalysed reaction is 5-(methylsulfanyl)-D-ribose + ATP = 5-(methylsulfanyl)-alpha-D-ribose 1-phosphate + ADP + H(+). It participates in amino-acid biosynthesis; L-methionine biosynthesis via salvage pathway; S-methyl-5-thio-alpha-D-ribose 1-phosphate from S-methyl-5'-thioadenosine (hydrolase route): step 2/2. Its function is as follows. Catalyzes the phosphorylation of methylthioribose into methylthioribose-1-phosphate. This chain is Methylthioribose kinase, found in Exiguobacterium sibiricum (strain DSM 17290 / CCUG 55495 / CIP 109462 / JCM 13490 / 255-15).